A 190-amino-acid chain; its full sequence is Potassium-transporting ATPase KdpC subunit (190 aa).

The chain crosses the membrane as a helical span at residues 10–30 (TFLFLLLITGGVYPLLTTALG).

The protein belongs to the KdpC family. As to quaternary structure, the system is composed of three essential subunits: KdpA, KdpB and KdpC.

It localises to the cell inner membrane. Functionally, part of the high-affinity ATP-driven potassium transport (or Kdp) system, which catalyzes the hydrolysis of ATP coupled with the electrogenic transport of potassium into the cytoplasm. This subunit acts as a catalytic chaperone that increases the ATP-binding affinity of the ATP-hydrolyzing subunit KdpB by the formation of a transient KdpB/KdpC/ATP ternary complex. In Escherichia coli O6:H1 (strain CFT073 / ATCC 700928 / UPEC), this protein is Potassium-transporting ATPase KdpC subunit.